The primary structure comprises 92 residues: MARTVNCVYLKKEAEGLGFQLYPGDLGKRIFDNVSKEAWALWQSKQTMLINENKLNMMNVDDRKFLEEQMINFLFEGKDVEIEGYVPQKDDE.

It belongs to the Fe(2+)-trafficking protein family.

Could be a mediator in iron transactions between iron acquisition and iron-requiring processes, such as synthesis and/or repair of Fe-S clusters in biosynthetic enzymes. The chain is Probable Fe(2+)-trafficking protein from Shewanella piezotolerans (strain WP3 / JCM 13877).